Consider the following 440-residue polypeptide: Dihydrolipoyllysine-residue acetyltransferase component of pyruvate dehydrogenase complex (440 aa).

Positions 2–78 (SIEVKMPALS…AVGQVIAVMA (77 aa)) constitute a Lipoyl-binding domain. The residue at position 43 (lysine 43) is an N6-lipoyllysine. Residues 91-113 (ASSQISEPSEKADVAQKETADSE) are disordered. The segment covering 98 to 110 (PSEKADVAQKETA) has biased composition (basic and acidic residues). In terms of domain architecture, Peripheral subunit-binding (PSBD) spans 149–186 (KASPLAKRLAKKNHVDLKQVNGSGPHGRIIKADIEAFI). Over residues 192-202 (ASSNPSVSTPE) the composition is skewed to polar residues. The disordered stretch occupies residues 192 to 214 (ASSNPSVSTPEASGKITHDTPHN). Residue histidine 412 is part of the active site.

This sequence belongs to the 2-oxoacid dehydrogenase family. Forms a 24-polypeptide structural core with octahedral symmetry. (R)-lipoate serves as cofactor.

It carries out the reaction N(6)-[(R)-dihydrolipoyl]-L-lysyl-[protein] + acetyl-CoA = N(6)-[(R)-S(8)-acetyldihydrolipoyl]-L-lysyl-[protein] + CoA. The pyruvate dehydrogenase complex catalyzes the overall conversion of pyruvate to acetyl-CoA and CO(2). It contains multiple copies of three enzymatic components: pyruvate dehydrogenase (E1), dihydrolipoamide acetyltransferase (E2) and lipoamide dehydrogenase (E3). In Zymomonas mobilis subsp. mobilis (strain ATCC 31821 / ZM4 / CP4), this protein is Dihydrolipoyllysine-residue acetyltransferase component of pyruvate dehydrogenase complex (pdhC).